The primary structure comprises 116 residues: Large ribosomal subunit protein bL17 (116 aa).

The protein belongs to the bacterial ribosomal protein bL17 family. In terms of assembly, part of the 50S ribosomal subunit. Contacts protein L32.

The chain is Large ribosomal subunit protein bL17 from Prochlorococcus marinus subsp. pastoris (strain CCMP1986 / NIES-2087 / MED4).